The sequence spans 177 residues: Trafficking regulator of GLUT4 1 (177 aa).

At 1–105 (MAHPVQSEFP…QDQEAPRDYL (105 aa)) the chain is on the cytoplasmic side. 3 positions are modified to phosphoserine: Ser48, Ser87, and Ser88. The interval 71–92 (EAPLPRSPSRASSRRASSIATT) is disordered. Positions 72–88 (APLPRSPSRASSRRASS) are enriched in low complexity. The helical intramembrane region spans 106–126 (ILAVVACFCPVWPLNLIPLII). The Cytoplasmic portion of the chain corresponds to 127-153 (SIMSRSSMQQGNVDGARRLGRLARLLS). Residues 154–174 (ITLIIMGIVIIMVAVTVNFTV) traverse the membrane as a helical segment. Over 175–177 (QKK) the chain is Extracellular.

The protein belongs to the CD225/Dispanin family. Interacts with SLC2A4; the interaction is required for proper SLC2A4 reacycling after insulin stimulation. As to expression, expressed at high levels in heart, mammary gland, adrenal gland, stomach, smooth muscle and skeletal muscle, and at lower levels in brain and lung. Strongly down-regulated in lung cancer tissues, due to hypermethylation of the corresponding locus. Expressed in adipose tissue.

The protein resides in the cell membrane. It localises to the endomembrane system. Its subcellular location is the cytoplasm. It is found in the perinuclear region. In terms of biological role, regulates insulin-mediated adipose tissue glucose uptake and transport by modulation of SLC2A4 recycling. Not required for SLC2A4 membrane fusion upon an initial stimulus, but rather is necessary for proper protein recycling during prolonged insulin stimulation. This is Trafficking regulator of GLUT4 1 from Homo sapiens (Human).